We begin with the raw amino-acid sequence, 262 residues long: 3-methyl-2-oxobutanoate hydroxymethyltransferase (262 aa).

Mg(2+) contacts are provided by D43 and D82. Residues 43–44 (DS), D82, and K111 each bind 3-methyl-2-oxobutanoate. E113 provides a ligand contact to Mg(2+). E180 functions as the Proton acceptor in the catalytic mechanism.

The protein belongs to the PanB family. Homodecamer; pentamer of dimers. It depends on Mg(2+) as a cofactor.

It localises to the cytoplasm. The catalysed reaction is 3-methyl-2-oxobutanoate + (6R)-5,10-methylene-5,6,7,8-tetrahydrofolate + H2O = 2-dehydropantoate + (6S)-5,6,7,8-tetrahydrofolate. It participates in cofactor biosynthesis; coenzyme A biosynthesis. Its function is as follows. Catalyzes the reversible reaction in which hydroxymethyl group from 5,10-methylenetetrahydrofolate is transferred onto alpha-ketoisovalerate to form ketopantoate. This Pyrobaculum aerophilum (strain ATCC 51768 / DSM 7523 / JCM 9630 / CIP 104966 / NBRC 100827 / IM2) protein is 3-methyl-2-oxobutanoate hydroxymethyltransferase.